We begin with the raw amino-acid sequence, 147 residues long: Putative protein CLUHP3 (147 aa).

Residues 14–47 (KEPEGGRRRLSHPGNMGWMRPSQETTPPDRSHHS) form a disordered region.

This chain is Putative protein CLUHP3 (CLUHP3), found in Homo sapiens (Human).